A 131-amino-acid polypeptide reads, in one-letter code: Small ribosomal subunit protein uS11 (131 aa).

This sequence belongs to the universal ribosomal protein uS11 family. As to quaternary structure, part of the 30S ribosomal subunit. Interacts with proteins S7 and S18. Binds to IF-3.

Its function is as follows. Located on the platform of the 30S subunit, it bridges several disparate RNA helices of the 16S rRNA. Forms part of the Shine-Dalgarno cleft in the 70S ribosome. This Helicobacter pylori (strain P12) protein is Small ribosomal subunit protein uS11.